The sequence spans 577 residues: Calcium-dependent protein kinase 22 (577 aa).

Residue Gly-2 is the site of N-myristoyl glycine attachment. One can recognise a Protein kinase domain in the interval 105–368 (YRLGAELGRG…AKEVLEHPWL (264 aa)). ATP is bound by residues 111 to 119 (LGRGEFGVT) and Lys-134. Residue Asp-234 is the Proton acceptor of the active site. The tract at residues 374–404 (APNVSLGEIVRSRLMQFSAMNKFKKKALGVV) is autoinhibitory domain. 4 consecutive EF-hand domains span residues 411 to 446 (EEMD…NGHP), 447 to 482 (VPET…IKKM), 483 to 518 (SNEE…ELGP), and 520 to 553 (EQVV…GSDW). Ca(2+)-binding residues include Asp-424, Asp-426, Ser-428, Asn-430, Asp-435, Asp-460, Asp-462, Asn-464, Thr-466, Glu-471, Asp-496, Asp-498, Asn-500, Glu-507, Asp-531, Asp-533, Asp-535, Arg-537, and Glu-542.

The protein belongs to the protein kinase superfamily. Ser/Thr protein kinase family. CDPK subfamily.

The protein resides in the membrane. The catalysed reaction is L-seryl-[protein] + ATP = O-phospho-L-seryl-[protein] + ADP + H(+). It carries out the reaction L-threonyl-[protein] + ATP = O-phospho-L-threonyl-[protein] + ADP + H(+). Activated by calcium. Autophosphorylation may play an important role in the regulation of the kinase activity. In terms of biological role, may play a role in signal transduction pathways that involve calcium as a second messenger. This chain is Calcium-dependent protein kinase 22, found in Oryza sativa subsp. japonica (Rice).